A 229-amino-acid polypeptide reads, in one-letter code: Potassium/proton antiporter CemA (229 aa).

The next 4 membrane-spanning stretches (helical) occupy residues alanine 6–cysteine 26, isoleucine 107–glycine 127, phenylalanine 152–leucine 172, and isoleucine 189–isoleucine 209.

This sequence belongs to the CemA family.

The protein localises to the plastid. It localises to the chloroplast inner membrane. The catalysed reaction is K(+)(in) + H(+)(out) = K(+)(out) + H(+)(in). In terms of biological role, contributes to K(+)/H(+) antiport activity by supporting proton efflux to control proton extrusion and homeostasis in chloroplasts in a light-dependent manner to modulate photosynthesis. Prevents excessive induction of non-photochemical quenching (NPQ) under continuous-light conditions. Indirectly promotes efficient inorganic carbon uptake into chloroplasts. In Aethionema grandiflorum (Persian stone-cress), this protein is Potassium/proton antiporter CemA.